The primary structure comprises 205 residues: Holliday junction branch migration complex subunit RuvA (205 aa).

Residues 1 to 65 (MIAKLKGILD…EDRIHLFGFL (65 aa)) are domain I. The domain II stretch occupies residues 66-144 (DNTEKVAFNM…NINTIANNTS (79 aa)). The interval 145-153 (LATLSTDSN) is flexible linker. A domain III region spans residues 154–205 (THDNILSDAITALIALGISRAEATQILSDIYALSPSISVNELVRTALQRRAK).

The protein belongs to the RuvA family. In terms of assembly, homotetramer. Forms an RuvA(8)-RuvB(12)-Holliday junction (HJ) complex. HJ DNA is sandwiched between 2 RuvA tetramers; dsDNA enters through RuvA and exits via RuvB. An RuvB hexamer assembles on each DNA strand where it exits the tetramer. Each RuvB hexamer is contacted by two RuvA subunits (via domain III) on 2 adjacent RuvB subunits; this complex drives branch migration. In the full resolvosome a probable DNA-RuvA(4)-RuvB(12)-RuvC(2) complex forms which resolves the HJ.

It is found in the cytoplasm. The RuvA-RuvB-RuvC complex processes Holliday junction (HJ) DNA during genetic recombination and DNA repair, while the RuvA-RuvB complex plays an important role in the rescue of blocked DNA replication forks via replication fork reversal (RFR). RuvA specifically binds to HJ cruciform DNA, conferring on it an open structure. The RuvB hexamer acts as an ATP-dependent pump, pulling dsDNA into and through the RuvAB complex. HJ branch migration allows RuvC to scan DNA until it finds its consensus sequence, where it cleaves and resolves the cruciform DNA. In Orientia tsutsugamushi (strain Ikeda) (Rickettsia tsutsugamushi), this protein is Holliday junction branch migration complex subunit RuvA.